The sequence spans 265 residues: Glutamate racemase (265 aa).

Substrate-binding positions include 7-8 (DS) and 39-40 (YG). C70 (proton donor/acceptor) is an active-site residue. Residue 71–72 (NT) participates in substrate binding. Catalysis depends on C179, which acts as the Proton donor/acceptor. 180-181 (TH) contacts substrate.

This sequence belongs to the aspartate/glutamate racemases family.

The catalysed reaction is L-glutamate = D-glutamate. The protein operates within cell wall biogenesis; peptidoglycan biosynthesis. Functionally, provides the (R)-glutamate required for cell wall biosynthesis. This Gloeobacter violaceus (strain ATCC 29082 / PCC 7421) protein is Glutamate racemase.